A 662-amino-acid polypeptide reads, in one-letter code: MTGGRFDFDDGGTYCGGWEEGKAHGHGICTGPKGQGEYSGSWSHGFEVVGGYTWPSGNTYQGYWAQGKRHGLGVETKGKWMYRGEWSHGFKGRYGVRQSLCTPARYEGTWSNGLQDGYGVETYGDGGTYQGQWAGGMRHGYGVRQSVPYGMATVIRSPLRTSLASLRSEQSNGSVLHDAAAAADTPTGTRGGFVLNFHADAELAGKKKGGLFRRGSLLGSMKLRKSESKSSISSKRSSVRSDAAMSRISSSDANSTISFGDVDCDFCPVEDHVDATTTETYMGEWKNDKRNGFGISERSNGMKYEGEWANNKRHGYGCTVFPDGSKEEGKYKNNILVRGIRKQLIPIRNTKTREKVDRAIEGAQRAAAMARTKVEIANSRTAHARAKADAADQAALAARQECDIARAVARELSPDFYQPGPDYIKQRLQEGVDAKENPEEKVPAKPPTPKESPHFYRKGTTPPGSPEASPKYSRSPQPSPPKPAKKQNPSSGARLNQDKRGVAEEQVTAIVNKPLTSKAPTKEVGAAVSQSKYSGRHHVPNPSNGELHSQYHGYYVKLHAPQHPPVDAEDDDRSSPSSSALVHKPSPNKWSPPKSVTKPVAKESKAEPKAKKSELAIPKNPASNDSCPSMEREANSGPNSVMIVLVMLLNIGLAILFVHFLT.

Residues 1 to 640 are Cytoplasmic-facing; sequence MTGGRFDFDD…EREANSGPNS (640 aa). MORN repeat units lie at residues 14–36, 38–59, 60–82, 106–128, and 129–151; these read YCGG…KGQG, YSGS…SGNT, YQGY…KWMY, YEGT…DGGT, and YQGQ…PYGM. Phosphoserine occurs at positions 157, 216, and 220. The tract at residues 228-247 is disordered; it reads SKSSISSKRSSVRSDAAMSR. 2 MORN repeats span residues 281 to 303 and 304 to 326; these read YMGE…NGMK and YEGE…DGSK. Basic and acidic residues predominate over residues 432 to 443; the sequence is VDAKENPEEKVP. Residues 432 to 634 form a disordered region; it reads VDAKENPEEK…DSCPSMEREA (203 aa). Thr-448 bears the Phosphothreonine mark. Ser-452 carries the post-translational modification Phosphoserine. Thr-461 is subject to Phosphothreonine. 3 positions are modified to phosphoserine: Ser-465, Ser-469, and Ser-475. Over residues 584–599 the composition is skewed to low complexity; that stretch reads KPSPNKWSPPKSVTKP. Basic and acidic residues predominate over residues 600–614; that stretch reads VAKESKAEPKAKKSE. A helical; Anchor for type IV membrane protein transmembrane segment spans residues 641–661; the sequence is VMIVLVMLLNIGLAILFVHFL.

It belongs to the junctophilin family.

It is found in the cell membrane. Its subcellular location is the endoplasmic reticulum membrane. It localises to the sarcoplasmic reticulum membrane. Functionally, junctophilins contribute to the formation of junctional membrane complexes (JMCs) which link the plasma membrane with the endoplasmic or sarcoplasmic reticulum in excitable cells. Provides a structural foundation for functional cross-talk between the cell surface and intracellular calcium release channels. JPH1 contributes to the construction of the skeletal muscle triad by linking the t-tubule (transverse-tubule) and SR (sarcoplasmic reticulum) membranes. The chain is Junctophilin-1 (JPH1) from Oryctolagus cuniculus (Rabbit).